The following is an 813-amino-acid chain: Receptor-like protein 48 (813 aa).

A signal peptide spans 1–30 (MHSCSERRMMTVIWSLCLIFCLSNSILAIA). Residues 31–786 (KDLCLPDQRD…EDEEKEEKNQ (756 aa)) lie on the Extracellular side of the membrane. N69, N105, and N123 each carry an N-linked (GlcNAc...) asparagine glycan. LRR repeat units lie at residues 111–134 (LQHLQSLELSSNNISGILPDSIGN), 136–159 (KYLRSLSFRTCHLFGKIPSSLGSL), and 160–182 (SYLTHLDLSYNDFTSEGPDSGGN). N-linked (GlcNAc...) asparagine glycosylation is found at N195 and N216. 21 LRR repeats span residues 196–219 (LSSVTWIDLGSNQLKGMLPSNMSS), 220–244 (LSKLVSFDISENSFSGSIPSSLFMI), 245–260 (PSLNFSGPLEIGNISS), 261–285 (HSELGYLYMGENNFNGPIPGSLSKL), 288–310 (LRDLSLSFWNTGRGIVDFSIFLH), 311–335 (LKSLCSLDLSYLNTRSMVDLSFFSH), 336–359 (LMSLDELDLSGINLKISSTLSFPS), 361–381 (TGTLILASCNIVEFPKFLENQ), 382–405 (TSLFYLDISANHIEGQVPEWLWRL), 406–432 (PTLSFVNIAQNSFSGELPMLPNSIYSF), 434–450 (ASDNQFSGEIPRTVCEL), 451–473 (VSLNTLVLSNNKFSGSIPRCFEN), 475–498 (KTISILHLRNNSLSGVFPKEIISE), 500–521 (LTSLDVGHNWLSGQLPKSLIKC), 523–544 (DLEFLNVEDNRINDKFPFWLRS), 545–571 (LSNLQILVLRSNEFYGPIFSLEDSLSF), 572–595 (PKLRIFDISENHFTGVLPSDYFAG), 642–666 (FTIYKTIDVSGNRLEGDIPESIGIL), 667–690 (KELIVLNMSNNAFTGHIPPSLSNL), 691–714 (SNLQSLDLSQNRLSGSIPPELGKL), and 716–739 (FLEWMNFSYNRLEGPIPQATQIQS). N248 and N257 each carry an N-linked (GlcNAc...) asparagine glycan. N380 carries N-linked (GlcNAc...) asparagine glycosylation. Residue N484 is glycosylated (N-linked (GlcNAc...) asparagine). N-linked (GlcNAc...) asparagine glycosylation is found at N673 and N689. Residues N721 and N741 are each glycosylated (N-linked (GlcNAc...) asparagine). Residues 756–785 (FLNKCGGEEEEEEEATKQEEDEDEEKEEKN) form a disordered region. The segment covering 763-781 (EEEEEEEATKQEEDEDEEK) has biased composition (acidic residues). A helical membrane pass occupies residues 787–807 (VFSWIAAAIGYVPGVFCGLTI). At 808-813 (AHILTS) the chain is on the cytoplasmic side.

This sequence belongs to the RLP family.

It is found in the cell membrane. Plays a role in root hair development. In Arabidopsis thaliana (Mouse-ear cress), this protein is Receptor-like protein 48.